We begin with the raw amino-acid sequence, 138 residues long: Large ribosomal subunit protein uL16 (138 aa).

The segment covering 1–16 (MLIPKRVKYRRQHRPT) has biased composition (basic residues). A disordered region spans residues 1–23 (MLIPKRVKYRRQHRPTRSGVSKG).

It belongs to the universal ribosomal protein uL16 family. Part of the 50S ribosomal subunit.

In terms of biological role, binds 23S rRNA and is also seen to make contacts with the A and possibly P site tRNAs. In Corynebacterium aurimucosum (strain ATCC 700975 / DSM 44827 / CIP 107346 / CN-1) (Corynebacterium nigricans), this protein is Large ribosomal subunit protein uL16.